Consider the following 166-residue polypeptide: Myeloid-derived growth factor (166 aa).

A signal peptide spans 1 to 24 (MAAPSGGFWTAVVLAAAALKLAAA).

This sequence belongs to the MYDGF family. As to expression, expressed in prostate, spleen and lung, and weakly expressed in the left ventricle (LF) and liver. Expressed predominantly in inflammatory cells, such as monocytes and macrophages, and weakly expressed in neutrophils, T-cells, B-cells, endothelial cells and cardiac myocytes, after myocardial infarction (MI) (at protein level).

The protein localises to the secreted. It is found in the endoplasmic reticulum-Golgi intermediate compartment. It localises to the endoplasmic reticulum. Its subcellular location is the golgi apparatus. Bone marrow-derived monocyte and paracrine-acting protein that promotes cardiac myocyte survival and adaptive angiogenesis for cardiac protection and/or repair after myocardial infarction (MI). Stimulates endothelial cell proliferation through a MAPK1/3-, STAT3- and CCND1-mediated signaling pathway. Inhibits cardiac myocyte apoptosis in a PI3K/AKT-dependent signaling pathway. In Mus musculus (Mouse), this protein is Myeloid-derived growth factor.